We begin with the raw amino-acid sequence, 348 residues long: uncharacterized protein (348 aa).

NADP(+) contacts are provided by Lys41 and Tyr170. Ser339 carries the phosphoserine modification.

The protein belongs to the NAD(P)-dependent epimerase/dehydratase family. Dihydroflavonol-4-reductase subfamily.

This is an uncharacterized protein from Saccharomyces cerevisiae (strain ATCC 204508 / S288c) (Baker's yeast).